The chain runs to 352 residues: DNA integrity scanning protein DisA (352 aa).

The DAC domain occupies 3–143 (PQELIEKIKL…NYKYVVNQVD (141 aa)). Residues glycine 71, leucine 89, and 102–106 (TRHRT) each bind ATP.

Belongs to the DisA family. Homooctamer. The cofactor is Mg(2+).

The catalysed reaction is 2 ATP = 3',3'-c-di-AMP + 2 diphosphate. Its function is as follows. Participates in a DNA-damage check-point. DisA forms globular foci that rapidly scan along the chromosomes searching for lesions. Also has diadenylate cyclase activity, catalyzing the condensation of 2 ATP molecules into cyclic di-AMP (c-di-AMP). c-di-AMP likely acts as a signaling molecule that may couple DNA integrity with a cellular process. The sequence is that of DNA integrity scanning protein DisA from Thermotoga petrophila (strain ATCC BAA-488 / DSM 13995 / JCM 10881 / RKU-1).